Consider the following 317-residue polypeptide: Putative 2-hydroxyacid dehydrogenase SAB2178 (317 aa).

NAD(+)-binding positions include 155–156 (EI), 234–236 (ASR), and Asp260. Arg236 is a catalytic residue. The active site involves Glu265. His283 acts as the Proton donor in catalysis. An NAD(+)-binding site is contributed by 283–286 (HIGN).

The protein belongs to the D-isomer specific 2-hydroxyacid dehydrogenase family.

The sequence is that of Putative 2-hydroxyacid dehydrogenase SAB2178 from Staphylococcus aureus (strain bovine RF122 / ET3-1).